A 177-amino-acid polypeptide reads, in one-letter code: Probable nicotinate-nucleotide adenylyltransferase (177 aa).

It belongs to the NadD family.

It catalyses the reaction nicotinate beta-D-ribonucleotide + ATP + H(+) = deamido-NAD(+) + diphosphate. Its pathway is cofactor biosynthesis; NAD(+) biosynthesis; deamido-NAD(+) from nicotinate D-ribonucleotide: step 1/1. Functionally, catalyzes the reversible adenylation of nicotinate mononucleotide (NaMN) to nicotinic acid adenine dinucleotide (NaAD). The polypeptide is Probable nicotinate-nucleotide adenylyltransferase (Nitratiruptor sp. (strain SB155-2)).